Consider the following 424-residue polypeptide: Testican-2 (424 aa).

The first 22 residues, 1–22 (MRAPGCGRLVLPLLLLAAAALA), serve as a signal peptide directing secretion. Residue S72 is modified to Phosphoserine; by FAM20C. 5 disulfides stabilise this stretch: C90/C101, C95/C111, C136/C166, C139/C159, and C148/C180. Residues 130–182 (GNKDSICKPCHMAQLASVCGSDGHTYSSVCKLEQQACLSSKQLAVRCEGPCPC) enclose the Kazal-like domain. An N-linked (GlcNAc...) asparagine glycan is attached at N225. The 67-residue stretch at 310-376 (KPPCLAELER…GTRTHGSPDC (67 aa)) folds into the Thyroglobulin type-1 domain. 3 disulfide bridges follow: C313-C337, C348-C355, and C357-C376. 2 O-linked (Xyl...) (glycosaminoglycan) serine glycosylation sites follow: S383 and S388. Positions 387 to 424 (GSGVGWEDEEEKETEEAGEEAEEEEGEAGEADDGGYIW) are disordered. Acidic residues predominate over residues 392–424 (WEDEEEKETEEAGEEAEEEEGEAGEADDGGYIW).

Contains chondroitin sulfate and heparan sulfate O-linked oligosaccharides. Highly expressed in brain. Also found in lung and testis.

The protein localises to the secreted. The protein resides in the extracellular space. It localises to the extracellular matrix. May participate in diverse steps of neurogenesis. Binds calcium. This is Testican-2 (SPOCK2) from Homo sapiens (Human).